Reading from the N-terminus, the 307-residue chain is MDEATAKSGTEQDGLTPVKPPEAELLVVTGMSGAGRSTASDALEDHGWYVVDNLPPQMLGTLAEIVSHAPKSIPKLAVVVDVRSKDLFTDIQTALGALSASGITFRVLFLDANDDVLVRRFEQGRRPHPLQGGGRILDGIGIEREVLRELREHADVVLDTSEFNVHGLATAITELFSDTGPVTLRLNVMSFGFKYGLPVDANFVADARFIPNPHWVPQLRPHTGLDEDVSDYVLGAEGVQEFVDRYVRALEPVLDGYRQENKHYATLAVGCTGGKHRSVAVAMELSKRLAQYPRVTVTTTHRDLGRE.

A disordered region spans residues 1–21; that stretch reads MDEATAKSGTEQDGLTPVKPP. ATP is bound at residue 30–37; sequence GMSGAGRS. 81 to 84 lines the GTP pocket; the sequence is DVRS.

This sequence belongs to the RapZ-like family.

Its function is as follows. Displays ATPase and GTPase activities. This is Nucleotide-binding protein AAur_2084 from Paenarthrobacter aurescens (strain TC1).